The sequence spans 402 residues: Phosphoglycerate kinase (402 aa).

Substrate contacts are provided by residues 21 to 23 (DFN), Arg-36, 59 to 62 (HLGR), Arg-119, and Arg-154. ATP is bound by residues Lys-207, Gly-298, Glu-329, and 356–359 (GGDA).

Belongs to the phosphoglycerate kinase family. As to quaternary structure, monomer.

The protein localises to the cytoplasm. The enzyme catalyses (2R)-3-phosphoglycerate + ATP = (2R)-3-phospho-glyceroyl phosphate + ADP. Its pathway is carbohydrate degradation; glycolysis; pyruvate from D-glyceraldehyde 3-phosphate: step 2/5. The chain is Phosphoglycerate kinase (pgk) from Chlamydia pneumoniae (Chlamydophila pneumoniae).